The chain runs to 520 residues: Cytochrome P450 72A397 (520 aa).

Residues 14–34 (AVAVAVVVVGWAWKVLNWVWV) form a helical membrane-spanning segment. A heme-binding site is contributed by Cys468.

This sequence belongs to the cytochrome P450 family. Heme serves as cofactor.

The protein resides in the membrane. It catalyses the reaction oleanolate + reduced [NADPH--hemoprotein reductase] + O2 = hederagenin + oxidized [NADPH--hemoprotein reductase] + H2O + H(+). In terms of biological role, catalyzes the oxidation of oleanolate at the C-23 position to form hederagenin. In Kalopanax septemlobus (Castor aralia), this protein is Cytochrome P450 72A397.